We begin with the raw amino-acid sequence, 500 residues long: Cytochrome P450 monooxygenase astJ (500 aa).

Cys440 contributes to the heme binding site.

Belongs to the cytochrome P450 family. Heme serves as cofactor.

The protein operates within secondary metabolite biosynthesis; terpenoid biosynthesis. Functionally, cytochrome P450 monooxygenase; part of the gene cluster that mediates the biosynthesis of astellolides, drimane-type sesquiterpene esters that show antimicrobial, anti-inflammatory, and anti-tumor activities. The first step in astellolide biosynthesis is performed by the sesquiterpene cyclase astC that catalyzes the formation of drimanyl pyrophosphate from farnesyl pyrophosphate. Drimanyl pyrophosphate is then dephosphorylated by the sesquiterpene phosphatase astI to produce drimanyl monophosphate which is further dephosphorylated to drim-8-ene-11-ol by atsK. Drim-8-ene-11-ol is converted to confertifolin, probably by the cytochrome P450 monooxygenase astD and/or the dehydrogenase astE. The cytochrome P450 monooxygenases astB, astF and astJ then hydroxylate confertifolin at C6, C14, or C15 to form trihydroxy confertifolin. The nonribosomal peptide synthetase astA catalyzes ester bond formation between trihydroxy contifolin and benzoic acid (BA) or 4-hydroxy benzoic acid (4HBA), leading to the formation of dideacetyl astellolides A and B, respectively. Finally, the O-acetyltransferase astG converts dideacetyl astellolides A and B into deacetyl astellolides A and B. The chain is Cytochrome P450 monooxygenase astJ from Aspergillus oryzae (strain ATCC 42149 / RIB 40) (Yellow koji mold).